Reading from the N-terminus, the 623-residue chain is Protein vein (623 aa).

An N-terminal signal peptide occupies residues 1–40 (MYAQHLRKWSLKTKKQLMPLILLIISYMLLLNTCVLSSSA). 4 disordered regions span residues 70–98 (IPLS…SSNN), 130–162 (DAGS…SMQK), 184–214 (AASS…NYSS), and 229–317 (PESM…QRYN). Composition is skewed to low complexity over residues 72-98 (LSSD…SSNN) and 136-158 (PAQQ…QQQQ). N-linked (GlcNAc...) asparagine glycosylation occurs at Asn-76. An N-linked (GlcNAc...) asparagine glycan is attached at Asn-211. Residues 233 to 248 (LEDRSPEQAARSRRDG) are compositionally biased toward basic and acidic residues. An N-linked (GlcNAc...) asparagine glycan is attached at Asn-252. A compositionally biased stretch (low complexity) spans 255–267 (RQQQRTGHRQQLQ). A compositionally biased stretch (basic residues) spans 305 to 316 (QRRKHQRKHQRY). N-linked (GlcNAc...) asparagine glycosylation is found at Asn-350, Asn-381, Asn-424, Asn-449, Asn-521, and Asn-574. An Ig-like C2-type domain is found at 457–542 (TKIFSKPSKA…AKNKASKAIA (86 aa)). 4 disulfide bridges follow: Cys-478–Cys-531, Cys-566–Cys-577, Cys-571–Cys-588, and Cys-590–Cys-599. Residues 561–599 (ASGIPCNFDYCFHNGTCRMIPDINEVYCRCPTEYFGNRC) enclose the EGF-like domain.

It localises to the secreted. Ligand for the EGF receptor. Seems to play a role in the global proliferation of wing disc cells and the larval patterning. Shows a strong synergistic genetic interaction with spi, suggesting a molecular interdependence. Required for the development of interveins cells. The chain is Protein vein (vn) from Drosophila melanogaster (Fruit fly).